The chain runs to 56 residues: Large ribosomal subunit protein bL32 (56 aa).

The protein belongs to the bacterial ribosomal protein bL32 family.

This is Large ribosomal subunit protein bL32 from Synechococcus sp. (strain CC9311).